The chain runs to 478 residues: Methionine aminopeptidase 2 (478 aa).

The disordered stretch occupies residues 1 to 122 (MAGVEQAASF…TDPPSVPICD (122 aa)). N-acetylalanine is present on A2. Basic residues predominate over residues 36–46 (KKKRRKKKKGK). S60 carries the post-translational modification Phosphoserine; alternate. The O-linked (GlcNAc) serine; alternate glycan is linked to S60. Acidic residues predominate over residues 80 to 92 (ERDDDDEDGDGDA). Residues 97–109 (GKKKKKKKKKRGP) show a composition bias toward basic residues. H231 lines the substrate pocket. Residues D251, D262, and H331 each coordinate a divalent metal cation. H339 is a substrate binding site. Residues E364 and E459 each coordinate a divalent metal cation.

The protein belongs to the peptidase M24A family. Methionine aminopeptidase eukaryotic type 2 subfamily. Binds EIF2S1 at low magnesium concentrations. Interacts strongly with the eIF-2 gamma-subunit EIF2S3. Co(2+) serves as cofactor. The cofactor is Zn(2+). It depends on Mn(2+) as a cofactor. Requires Fe(2+) as cofactor. In terms of processing, contains approximately 12 O-linked N-acetylglucosamine (GlcNAc) residues. O-glycosylation is required for EIF2S1 binding.

It is found in the cytoplasm. It catalyses the reaction Release of N-terminal amino acids, preferentially methionine, from peptides and arylamides.. In terms of biological role, cotranslationally removes the N-terminal methionine from nascent proteins. The N-terminal methionine is often cleaved when the second residue in the primary sequence is small and uncharged (Met-Ala-, Cys, Gly, Pro, Ser, Thr, or Val). Its function is as follows. Protects eukaryotic initiation factor EIF2S1 from translation-inhibiting phosphorylation by inhibitory kinases such as EIF2AK2/PKR and EIF2AK1/HCR. Plays a critical role in the regulation of protein synthesis. The polypeptide is Methionine aminopeptidase 2 (Metap2) (Mus musculus (Mouse)).